A 148-amino-acid polypeptide reads, in one-letter code: Deoxyuridine 5'-triphosphate nucleotidohydrolase (148 aa).

DUMP-binding residues include S69, G82, D85, Y88, R137, F142, and G143.

Belongs to the dUTPase family. In terms of assembly, homotrimer. It depends on Mg(2+) as a cofactor.

It carries out the reaction dUTP + H2O = dUMP + diphosphate + H(+). It participates in pyrimidine metabolism; dUMP biosynthesis; dUMP from dCTP (dUTP route): step 2/2. Its function is as follows. Involved in nucleotide metabolism via production of dUMP, the immediate precursor of thymidine nucleotides, and decreases the intracellular concentration of dUTP so that uracil cannot be incorporated into DNA. This is Deoxyuridine 5'-triphosphate nucleotidohydrolase (DUT1) from Kluyveromyces lactis (strain ATCC 8585 / CBS 2359 / DSM 70799 / NBRC 1267 / NRRL Y-1140 / WM37) (Yeast).